The chain runs to 104 residues: Thiosulfate sulfurtransferase PspE (104 aa).

The signal sequence occupies residues Met-1–Ala-19. Positions Ala-20 to Gly-104 constitute a Rhodanese domain. Cys-67 acts as the Cysteine persulfide intermediate in catalysis.

In terms of assembly, monomer.

Its subcellular location is the periplasm. It catalyses the reaction thiosulfate + hydrogen cyanide = thiocyanate + sulfite + 2 H(+). Its activity is regulated as follows. Inhibited by thiosulfate above 100 mM, particularly at low cyanide concentrations (&lt;5 mM). Inhibited by sodium sulfate or sodium chloride at 0.25 M which gives around 50% inhibition of rhodanese activity. Addition of sodium phosphate at the same concentration results in about 65% inhibition. Sulfite strongly inhibits PspE activity (1 mM sodium sulfite resulted in more than 50% inhibition of rhodanese activity). Functionally, the phage shock protein (psp) operon (pspABCDE) may play a significant role in the competition for survival under nutrient- or energy-limited conditions. PspE catalyzes the sulfur-transfer reaction from thiosulfate to cyanide, to form sulfite and thiocyanate. Also able to use dithiol (dithiothreitol) as an alternate sulfur acceptor. Also possesses a very low mercaptopyruvate sulfurtransferase activity. The polypeptide is Thiosulfate sulfurtransferase PspE (pspE) (Escherichia coli (strain K12)).